Reading from the N-terminus, the 510-residue chain is D-alanine--D-alanyl carrier protein ligase (510 aa).

Residue 157-158 (TS) participates in ATP binding. Asp202 serves as a coordination point for D-alanine. ATP is bound at residue 297–302 (NTYGPT). Val306 lines the D-alanine pocket. Residues Asp389 and Lys498 each contribute to the ATP site. Position 498 (Lys498) interacts with D-alanine.

This sequence belongs to the ATP-dependent AMP-binding enzyme family. DltA subfamily.

The protein resides in the cytoplasm. The enzyme catalyses holo-[D-alanyl-carrier protein] + D-alanine + ATP = D-alanyl-[D-alanyl-carrier protein] + AMP + diphosphate. It functions in the pathway cell wall biogenesis; lipoteichoic acid biosynthesis. Catalyzes the first step in the D-alanylation of lipoteichoic acid (LTA), the activation of D-alanine and its transfer onto the D-alanyl carrier protein (Dcp) DltC. In an ATP-dependent two-step reaction, forms a high energy D-alanyl-AMP intermediate, followed by transfer of the D-alanyl residue as a thiol ester to the phosphopantheinyl prosthetic group of the Dcp. D-alanylation of LTA plays an important role in modulating the properties of the cell wall in Gram-positive bacteria, influencing the net charge of the cell wall. This Listeria welshimeri serovar 6b (strain ATCC 35897 / DSM 20650 / CCUG 15529 / CIP 8149 / NCTC 11857 / SLCC 5334 / V8) protein is D-alanine--D-alanyl carrier protein ligase.